A 1957-amino-acid polypeptide reads, in one-letter code: Chromatin modification-related protein EAF1 A (1957 aa).

Disordered regions lie at residues 108-208 (ASPH…TDLV), 261-287 (NRVS…GSKT), 323-373 (GGSP…SHAN), and 449-469 (NQSH…ETEK). Positions 140–151 (SENKSVEGERNL) are enriched in basic and acidic residues. Polar residues-rich tracts occupy residues 261–270 (NRVSSNSLNT), 333–342 (GQKNSSTQLN), and 355–372 (TNRG…SSHA). Residues 563-641 (CGTAPVEVRE…LSNAILQFWS (79 aa)) enclose the HSA domain. Disordered regions lie at residues 833–909 (GSNS…AVQK) and 928–950 (AETS…DQTW). Residues 884 to 898 (TDASSGDTSSFQDEY) show a composition bias toward polar residues. The 57-residue stretch at 1049-1105 (SGNPWSLFEDQALVVLVHDMGPNWELISDAMNSTLKIKCIYRNPTECKDRHKILMDK) folds into the SANT domain. Disordered regions lie at residues 1107-1131 (AGDG…PGIP), 1282-1314 (TPVL…GLQS), 1344-1367 (LSGR…DRGH), 1449-1644 (QGNS…QQLN), 1687-1768 (PVRP…IAPA), 1804-1840 (ELSK…PQAS), and 1876-1957 (SSNT…TKVE). Composition is skewed to polar residues over residues 1116 to 1125 (DSGNSQSYPS), 1290 to 1314 (AHPS…GLQS), 1344 to 1358 (LSGR…STPA), 1459 to 1472 (SNLS…TTPV), 1479 to 1492 (LSQQ…SHVL), and 1501 to 1510 (QSPSQATGAQ). Composition is skewed to low complexity over residues 1523–1534 (QRYLQQQQQQQQ) and 1545–1562 (VQQP…NSPQ). The span at 1563–1579 (TQPPVSPQPLSMPPVSP) shows a compositional bias: pro residues. 5 stretches are compositionally biased toward polar residues: residues 1582-1595 (NINA…QKSQ), 1604-1618 (SPQS…QAGK), 1635-1644 (RQPTQGQQLN), 1691-1722 (DQQS…QQLP), and 1734-1758 (QQQM…CNIL). The segment covering 1759 to 1768 (STSSPSIAPA) has biased composition (low complexity). Basic and acidic residues predominate over residues 1805–1815 (LSKKSQAERMP). Composition is skewed to polar residues over residues 1819–1832 (QSVT…SMGT) and 1876–1894 (SSNT…NQGL). Composition is skewed to basic and acidic residues over residues 1913–1922 (SEEKRPKLPE) and 1932–1942 (LASEEQPHLEE).

It belongs to the EAF1 family. As to quaternary structure, component of the NuA4 histone acetyltransferase complex. Interacts with ARP4 and SWC4, and (via HSA domain) with TAF14 and TAF14B. Expressed in leaves.

The protein localises to the nucleus. Its function is as follows. Component of the NuA4 histone acetyltransferase complex which is involved in transcriptional activation of selected genes principally by acetylation of nucleosomal histone H4 and H2A. The sequence is that of Chromatin modification-related protein EAF1 A (EAF1A) from Arabidopsis thaliana (Mouse-ear cress).